Consider the following 504-residue polypeptide: Maturase K (504 aa).

Belongs to the intron maturase 2 family. MatK subfamily.

The protein localises to the plastid. The protein resides in the chloroplast. In terms of biological role, usually encoded in the trnK tRNA gene intron. Probably assists in splicing its own and other chloroplast group II introns. This Eichhornia crassipes (Water hyacinth) protein is Maturase K.